Consider the following 379-residue polypeptide: MNAVTPTLPAPIGLLAELTHRCPLRCPYCSNPLELDKRSAELDTATWQRVLAEAAALGVLHIHLSGGEPTARQDIVEITRTCADLGLYSNLITSGVGAALGKLEALYDAGLDHVQLSFQSAEAGNAERIGGLKNAQAQKFAFAERVVALGLPLTLNAVIHRGNIDEVPTLIDLAVTLGAKRLEVAHTQYYGWAYVNRAALMPAKADVDRSIRVVEEARERLKGRLVIDLVVPDYYAKYPKACAGGWGRRLMNVTPAGKVLPCHAAETIPGLEFWNVQDHALADIWAHSPAFQAYRGTSWMKEPCRSCDRREKDWGGCRCQALALAGDAAATDPACSLSPLHAKIQALAIAESALEIAPDYQYRTIGGAPAVPQPEGASA.

A Radical SAM core domain is found at 8 to 220 (LPAPIGLLAE…IRVVEEARER (213 aa)). C22, C26, and C29 together coordinate [4Fe-4S] cluster.

Belongs to the radical SAM superfamily. PqqE family. Interacts with PqqD. The interaction is necessary for activity of PqqE. [4Fe-4S] cluster is required as a cofactor.

The catalysed reaction is [PQQ precursor protein] + S-adenosyl-L-methionine = E-Y cross-linked-[PQQ precursor protein] + 5'-deoxyadenosine + L-methionine + H(+). It participates in cofactor biosynthesis; pyrroloquinoline quinone biosynthesis. Catalyzes the cross-linking of a glutamate residue and a tyrosine residue in the PqqA protein as part of the biosynthesis of pyrroloquinoline quinone (PQQ). This is PqqA peptide cyclase from Methylobacterium nodulans (strain LMG 21967 / CNCM I-2342 / ORS 2060).